The primary structure comprises 467 residues: Cruzipain (467 aa).

Positions 1 to 18 are cleaved as a signal peptide; sequence MSGWARALLLAAVLVVMA. A propeptide spans 19-122 (activation peptide); that stretch reads CLVPAATASL…RVPVKVEVVG (104 aa). 3 disulfides stabilise this stretch: C144-C185, C178-C223, and C277-C325. C147 is a catalytic residue. N169 carries N-linked (GlcNAc...) asparagine glycosylation. Residue H284 is part of the active site. N292 carries N-linked (GlcNAc...) asparagine glycosylation. N304 is an active-site residue. A disordered region spans residues 333–355; sequence SAVVGGPGPTPEPTTTTTTSAPG. Residues 345–354 show a composition bias toward low complexity; that stretch reads PTTTTTTSAP. N377 carries an N-linked (GlcNAc...) asparagine glycan.

This sequence belongs to the peptidase C1 family.

The enzyme catalyses Broad endopeptidase specificity similar to that of cathepsin L.. Strongly inhibited by E-64 (L-trans-epoxysuccinylleucylamido(4-guanidino)butane), Leupeptin, and N-alpha-p-tosyl-L-lysine chloromethyl ketone. In terms of biological role, hydrolyzes chromogenic peptides at the carboxyl Arg or Lys; requires at least one more amino acid, preferably Arg, Phe, Val or Leu, between the terminal Arg or Lys and the amino-blocking group. Functionally, the cysteine protease may play an important role in the development and differentiation of the parasites at several stages of their life cycle. This Trypanosoma cruzi protein is Cruzipain.